Here is a 514-residue protein sequence, read N- to C-terminus: Type-2 serine--tRNA ligase (514 aa).

A313 is an L-serine binding site. Residue C315 coordinates Zn(2+). R344 is an L-serine binding site. ATP contacts are provided by residues 344 to 346 (RWE) and 355 to 356 (RV). Position 361–363 (361–363 (RGE)) interacts with L-serine. 2 residues coordinate Zn(2+): E363 and C470. R477 contributes to the ATP binding site.

It belongs to the class-II aminoacyl-tRNA synthetase family. Type-2 seryl-tRNA synthetase subfamily. In terms of assembly, homodimer. It depends on Zn(2+) as a cofactor.

It is found in the cytoplasm. The catalysed reaction is tRNA(Ser) + L-serine + ATP = L-seryl-tRNA(Ser) + AMP + diphosphate + H(+). It catalyses the reaction tRNA(Sec) + L-serine + ATP = L-seryl-tRNA(Sec) + AMP + diphosphate + H(+). It participates in aminoacyl-tRNA biosynthesis; selenocysteinyl-tRNA(Sec) biosynthesis; L-seryl-tRNA(Sec) from L-serine and tRNA(Sec): step 1/1. Its function is as follows. Catalyzes the attachment of serine to tRNA(Ser). Is also able to aminoacylate tRNA(Sec) with serine, to form the misacylated tRNA L-seryl-tRNA(Sec), which will be further converted into selenocysteinyl-tRNA(Sec). In Methanococcus maripaludis (strain DSM 14266 / JCM 13030 / NBRC 101832 / S2 / LL), this protein is Type-2 serine--tRNA ligase (serS).